The following is a 279-amino-acid chain: MAATAAQAVAVKGSVAVPPCGSRGRRRGAVASVRMAAAAATSALRIGRRSPFLGRRLAVGPRRSRPVPRNLVAPVQMNLAFAKATKWWEKGLQPNMREVESAQDLVDSLTNAGDNLVIVDFFSPGCGGCRALHPKICQIAEQNPDVLFLQVNYEEHKSMCYSLHVHVLPFFRFYRGAQGRLCSFSCTNATIKKFRDALAKHKPDRCSLGPTRGLEESELLALAANKDLQFNYTKKPELVPSGDAAAAQELDRGSTKLSPPAKPLVKQGSEERSLVSSGR.

A chloroplast-targeting transit peptide spans 1-34 (MAATAAQAVAVKGSVAVPPCGSRGRRRGAVASVR). Residues 61–203 (PRRSRPVPRN…FRDALAKHKP (143 aa)) enclose the Thioredoxin domain. Residues Cys-126 and Cys-129 each act as nucleophile in the active site. An intrachain disulfide couples Cys-126 to Cys-129. Residues 242-279 (GDAAAAQELDRGSTKLSPPAKPLVKQGSEERSLVSSGR) are disordered.

It belongs to the thioredoxin family.

The protein localises to the plastid. The protein resides in the chloroplast. Probable thiol-disulfide oxidoreductase that may participate in various redox reactions. This Oryza sativa subsp. japonica (Rice) protein is Thioredoxin-like 1-2, chloroplastic.